Consider the following 527-residue polypeptide: Peptide chain release factor 3 (527 aa).

One can recognise a tr-type G domain in the interval 9–277 (AKRRTFAIIS…CIVDWAPQPL (269 aa)). GTP contacts are provided by residues 18 to 25 (SHPDAGKT), 86 to 90 (DTPGH), and 140 to 143 (NKLD).

This sequence belongs to the TRAFAC class translation factor GTPase superfamily. Classic translation factor GTPase family. PrfC subfamily.

The protein localises to the cytoplasm. Functionally, increases the formation of ribosomal termination complexes and stimulates activities of RF-1 and RF-2. It binds guanine nucleotides and has strong preference for UGA stop codons. It may interact directly with the ribosome. The stimulation of RF-1 and RF-2 is significantly reduced by GTP and GDP, but not by GMP. This Pseudomonas paraeruginosa (strain DSM 24068 / PA7) (Pseudomonas aeruginosa (strain PA7)) protein is Peptide chain release factor 3.